The primary structure comprises 197 residues: Holliday junction branch migration complex subunit RuvA (197 aa).

Residues 1–63 (MFDYIKGQLT…EDAHLLFGFH (63 aa)) form a domain I region. The segment at 64–142 (TENEKDVFLK…TIPEGGQAQQ (79 aa)) is domain II. Residues 142-146 (QMPKA) are flexible linker. Residues 147–197 (KGNQQLDEAIEALLALGYKATELKKIRAFFEGTDDTAEQYIKSALKMLMKG) are domain III.

Belongs to the RuvA family. Homotetramer. Forms an RuvA(8)-RuvB(12)-Holliday junction (HJ) complex. HJ DNA is sandwiched between 2 RuvA tetramers; dsDNA enters through RuvA and exits via RuvB. An RuvB hexamer assembles on each DNA strand where it exits the tetramer. Each RuvB hexamer is contacted by two RuvA subunits (via domain III) on 2 adjacent RuvB subunits; this complex drives branch migration. In the full resolvosome a probable DNA-RuvA(4)-RuvB(12)-RuvC(2) complex forms which resolves the HJ.

The protein localises to the cytoplasm. The RuvA-RuvB-RuvC complex processes Holliday junction (HJ) DNA during genetic recombination and DNA repair, while the RuvA-RuvB complex plays an important role in the rescue of blocked DNA replication forks via replication fork reversal (RFR). RuvA specifically binds to HJ cruciform DNA, conferring on it an open structure. The RuvB hexamer acts as an ATP-dependent pump, pulling dsDNA into and through the RuvAB complex. HJ branch migration allows RuvC to scan DNA until it finds its consensus sequence, where it cleaves and resolves the cruciform DNA. The protein is Holliday junction branch migration complex subunit RuvA of Streptococcus uberis (strain ATCC BAA-854 / 0140J).